The following is a 190-amino-acid chain: MSTENSPTDYATLTQVLQQQGVALTAAEMHGLLSGLLCGGNRDDSWLTLVHDLTNEGMAFSQHLSQPLQVLYGQTRSALEGGEFAFQLLLPGEDDASVFARADALAGWVNHFLLGLGMMQTKLGQVKGDVGESIDDLRNIAQLGYDEDEDQETLAHSLEEVAEYVRMAAMLCHGEFSCSGGPASDTPRLH.

Belongs to the UPF0149 family.

The polypeptide is UPF0149 protein NT01EI_3357 (Edwardsiella ictaluri (strain 93-146)).